We begin with the raw amino-acid sequence, 627 residues long: 2-oxoacid:ferredoxin oxidoreductase 1, subunit alpha (627 aa).

The YPITP motif signature appears at 253 to 257; it reads YPITP. Substrate is bound by residues T256 and R344.

Heterodimer composed of an alpha and a beta subunit.

The enzyme catalyses a 2-oxocarboxylate + 2 oxidized [2Fe-2S]-[ferredoxin] + CoA = an acyl-CoA + 2 reduced [2Fe-2S]-[ferredoxin] + CO2 + H(+). With respect to regulation, inhibited by low concentration of 4-fluoro-7-nitrobenzofurazan (NBD-F). Catalyzes the coenzyme A-dependent oxidative decarboxylation of different 2-oxoacids such as 2-oxoglutarate, pyruvate and 2-oxobutyrate to form their CoA derivatives. This Sulfurisphaera tokodaii (strain DSM 16993 / JCM 10545 / NBRC 100140 / 7) (Sulfolobus tokodaii) protein is 2-oxoacid:ferredoxin oxidoreductase 1, subunit alpha.